We begin with the raw amino-acid sequence, 244 residues long: Orotidine 5'-phosphate decarboxylase (244 aa).

Substrate-binding positions include Asp20, Lys42, 70–79, Thr125, Arg186, Gln195, Gly215, and Arg216; that span reads DLKFFDIPAT. The Proton donor role is filled by Lys72.

The protein belongs to the OMP decarboxylase family. Type 1 subfamily. In terms of assembly, homodimer.

It catalyses the reaction orotidine 5'-phosphate + H(+) = UMP + CO2. It functions in the pathway pyrimidine metabolism; UMP biosynthesis via de novo pathway; UMP from orotate: step 2/2. In terms of biological role, catalyzes the decarboxylation of orotidine 5'-monophosphate (OMP) to uridine 5'-monophosphate (UMP). The sequence is that of Orotidine 5'-phosphate decarboxylase from Xylella fastidiosa (strain M23).